Here is a 648-residue protein sequence, read N- to C-terminus: Transketolase (648 aa).

His-22 lines the substrate pocket. Thiamine diphosphate is bound by residues His-62 and 109-111 (GPL). Asp-150 is a Mg(2+) binding site. The thiamine diphosphate site is built by Gly-151 and Asn-180. Residues Asn-180 and Val-182 each contribute to the Mg(2+) site. Substrate contacts are provided by His-252, Arg-345, and Ser-372. His-252 provides a ligand contact to thiamine diphosphate. The Proton donor role is filled by Glu-397. Residue Phe-423 coordinates thiamine diphosphate. Substrate is bound by residues His-447, Asp-455, and Arg-506.

Belongs to the transketolase family. Homodimer. Mg(2+) serves as cofactor. Requires Ca(2+) as cofactor. The cofactor is Mn(2+). It depends on Co(2+) as a cofactor. Thiamine diphosphate is required as a cofactor.

It carries out the reaction D-sedoheptulose 7-phosphate + D-glyceraldehyde 3-phosphate = aldehydo-D-ribose 5-phosphate + D-xylulose 5-phosphate. Functionally, catalyzes the transfer of a two-carbon ketol group from a ketose donor to an aldose acceptor, via a covalent intermediate with the cofactor thiamine pyrophosphate. The chain is Transketolase (tkt) from Mycoplasma pneumoniae (strain ATCC 29342 / M129 / Subtype 1) (Mycoplasmoides pneumoniae).